Reading from the N-terminus, the 236-residue chain is Small ribosomal subunit protein eS6 (236 aa).

Belongs to the eukaryotic ribosomal protein eS6 family. In terms of assembly, component of the small ribosomal subunit. Part of the small subunit (SSU) processome, composed of more than 70 proteins and the RNA chaperone small nucleolar RNA (snoRNA) U3. Post-translationally, ribosomal protein S6 is the major substrate of protein kinases in eukaryote ribosomes.

It is found in the cytoplasm. Its subcellular location is the nucleus. It localises to the nucleolus. Component of the 40S small ribosomal subunit. Plays an important role in controlling cell growth and proliferation through the selective translation of particular classes of mRNA. Part of the small subunit (SSU) processome, first precursor of the small eukaryotic ribosomal subunit. During the assembly of the SSU processome in the nucleolus, many ribosome biogenesis factors, an RNA chaperone and ribosomal proteins associate with the nascent pre-rRNA and work in concert to generate RNA folding, modifications, rearrangements and cleavage as well as targeted degradation of pre-ribosomal RNA by the RNA exosome. The polypeptide is Small ribosomal subunit protein eS6 (rps6) (Dictyostelium discoideum (Social amoeba)).